The sequence spans 155 residues: Probable adenylyl-sulfate kinase (155 aa).

ATP is bound at residue 9–16 (GPSGAGKT). The active-site Phosphoserine intermediate is the serine 83. The segment at 134–155 (LDGEYEEPENPEVVVDTDKNDR) is disordered.

It belongs to the APS kinase family.

The enzyme catalyses adenosine 5'-phosphosulfate + ATP = 3'-phosphoadenylyl sulfate + ADP + H(+). The protein operates within sulfur metabolism; hydrogen sulfide biosynthesis; sulfite from sulfate: step 2/3. Functionally, catalyzes the synthesis of activated sulfate. This Archaeoglobus fulgidus (strain ATCC 49558 / DSM 4304 / JCM 9628 / NBRC 100126 / VC-16) protein is Probable adenylyl-sulfate kinase (cysC).